The sequence spans 183 residues: Capsid protein (183 aa).

A disordered region spans residues 150–183 (RQRGRTIRRRTPSPRRRRSQSPRRRRSQSRESQC). A compositionally biased stretch (basic residues) spans 151–176 (QRGRTIRRRTPSPRRRRSQSPRRRRS). Positions 158–175 (RRTPSPRRRRSQSPRRRR) match the Bipartite nuclear localization signal motif. 2 positions are modified to phosphoserine; by host: S162 and S170. 2 tandem repeats follow at residues 162–169 (SPRRRRSQ) and 170–177 (SPRRRRSQ). The segment at 162-177 (SPRRRRSQSPRRRRSQ) is 2 X 8 AA repeats of S-P-R-R-R-[PR]-S-Q. The tract at residues 177–183 (QSRESQC) is RNA binding.

This sequence belongs to the orthohepadnavirus core antigen family. Homodimerizes, then multimerizes. Interacts with cytosol exposed regions of viral L glycoprotein present in the reticulum-to-Golgi compartment. Interacts with human FLNB. Phosphorylated form interacts with host importin alpha; this interaction depends on the exposure of the NLS, which itself depends upon genome maturation and/or phosphorylation of the capsid protein. Interacts with host NUP153. In terms of processing, phosphorylated by host SRPK1, SRPK2, and maybe protein kinase C or GAPDH. Phosphorylation is critical for pregenomic RNA packaging. Protein kinase C phosphorylation is stimulated by HBx protein and may play a role in transport of the viral genome to the nucleus at the late step during the viral replication cycle.

It localises to the virion. Its subcellular location is the host cytoplasm. Self assembles to form an icosahedral capsid. Most capsids appear to be large particles with an icosahedral symmetry of T=4 and consist of 240 copies of capsid protein, though a fraction forms smaller T=3 particles consisting of 180 capsid proteins. Entering capsids are transported along microtubules to the nucleus. Phosphorylation of the capsid is thought to induce exposure of nuclear localization signal in the C-terminal portion of the capsid protein that allows binding to the nuclear pore complex via the importin (karyopherin-) alpha and beta. Capsids are imported in intact form through the nuclear pore into the nuclear basket, where it probably binds NUP153. Only capsids that contain the mature viral genome can release the viral DNA and capsid protein into the nucleoplasm. Immature capsids get stuck in the basket. Capsids encapsulate the pre-genomic RNA and the P protein. Pre-genomic RNA is reverse-transcribed into DNA while the capsid is still in the cytoplasm. The capsid can then either be directed to the nucleus, providing more genomes for transcription, or bud through the endoplasmic reticulum to provide new virions. The protein is Capsid protein of Homo sapiens (Human).